Consider the following 61-residue polypeptide: Small ribosomal subunit protein uS14 (61 aa).

Residues Cys24, Cys27, Cys40, and Cys43 each contribute to the Zn(2+) site.

Belongs to the universal ribosomal protein uS14 family. Zinc-binding uS14 subfamily. In terms of assembly, part of the 30S ribosomal subunit. Contacts proteins S3 and S10. Zn(2+) is required as a cofactor.

Its function is as follows. Binds 16S rRNA, required for the assembly of 30S particles and may also be responsible for determining the conformation of the 16S rRNA at the A site. This is Small ribosomal subunit protein uS14 from Borrelia garinii subsp. bavariensis (strain ATCC BAA-2496 / DSM 23469 / PBi) (Borreliella bavariensis).